The following is a 239-amino-acid chain: Lipoprotein-releasing system ATP-binding protein LolD (239 aa).

An ABC transporter domain is found at 9 to 239 (LQVQHVSKHY…AATSPTGLAE (231 aa)). 45 to 52 (GSSGSGKS) provides a ligand contact to ATP.

This sequence belongs to the ABC transporter superfamily. Lipoprotein translocase (TC 3.A.1.125) family. As to quaternary structure, the complex is composed of two ATP-binding proteins (LolD) and two transmembrane proteins (LolC and LolE).

The protein localises to the cell inner membrane. Functionally, part of the ABC transporter complex LolCDE involved in the translocation of mature outer membrane-directed lipoproteins, from the inner membrane to the periplasmic chaperone, LolA. Responsible for the formation of the LolA-lipoprotein complex in an ATP-dependent manner. The protein is Lipoprotein-releasing system ATP-binding protein LolD of Shewanella frigidimarina (strain NCIMB 400).